Consider the following 700-residue polypeptide: Methionine--tRNA ligase (700 aa).

Positions P13–H23 match the 'HIGH' region motif. Zn(2+)-binding residues include C144, C147, C157, and C160. The short motif at K341 to S345 is the 'KMSKS' region element. Position 344 (K344) interacts with ATP. The tRNA-binding domain maps to D598 to A700.

It belongs to the class-I aminoacyl-tRNA synthetase family. MetG type 1 subfamily. Homodimer. Zn(2+) serves as cofactor.

The protein localises to the cytoplasm. It catalyses the reaction tRNA(Met) + L-methionine + ATP = L-methionyl-tRNA(Met) + AMP + diphosphate. Its function is as follows. Is required not only for elongation of protein synthesis but also for the initiation of all mRNA translation through initiator tRNA(fMet) aminoacylation. This chain is Methionine--tRNA ligase, found in Psychrobacter arcticus (strain DSM 17307 / VKM B-2377 / 273-4).